Here is a 248-residue protein sequence, read N- to C-terminus: MLTIISSAKTLNFELIAFKGELTSPAFPKITNQLLAIVKNYSEVQLSKTMDISEKLAHLNKERFQNFEKQDSKAAIFAYAGDVFNNIQSKNLSEDAVNFLQSHLLIISGLYGALKPLDAIKPYRLEMAAKLNEINDLSKFWQDEITNYINHTLEHHKHKYLLNLASQEYSSVLNQDKLKYPIINIHFKENRNGKLATIGINAKKARGNMVNFIANNLIDSPDLLKEFSYLGYKYSSKDSLNNDLVFVK.

Belongs to the UPF0246 family.

This chain is UPF0246 protein A1I_02510, found in Rickettsia bellii (strain OSU 85-389).